The primary structure comprises 261 residues: uncharacterized protein (261 aa).

The 236-residue stretch at 1-236 (MEIKEITIIG…SRKINEVDNW (236 aa)) folds into the ABC transporter domain. 36–43 (GPTGSGKS) is a binding site for ATP.

It belongs to the ABC transporter superfamily.

This is an uncharacterized protein from Methanocaldococcus jannaschii (strain ATCC 43067 / DSM 2661 / JAL-1 / JCM 10045 / NBRC 100440) (Methanococcus jannaschii).